We begin with the raw amino-acid sequence, 282 residues long: MSNKIINLGSIEIANDKPFVLFGGMNVLESRDLAMSIAETYAEVTQKLGIPYVFKASFDKANRSSINSYRGPGMEEGLKIFEEIKKTFNLPLITDVHEVHQCAPVAEVVDIIQLPAFLARQTDLVVAMAKTGAIINVKKPQFLAPHEMRHIITKFNEAGNDEIILCERGSSFGYNNLVVDMLGMDEMKQSGYPVIFDATHALQRPGGRADSAGGRRAQATELARSGMALGLAGLFIEAHPDPDNAKCDGPCALPLHQLENYLKQMKAIDDLVKSFEPIDTSK.

Belongs to the KdsA family.

It localises to the cytoplasm. The catalysed reaction is D-arabinose 5-phosphate + phosphoenolpyruvate + H2O = 3-deoxy-alpha-D-manno-2-octulosonate-8-phosphate + phosphate. It participates in carbohydrate biosynthesis; 3-deoxy-D-manno-octulosonate biosynthesis; 3-deoxy-D-manno-octulosonate from D-ribulose 5-phosphate: step 2/3. It functions in the pathway bacterial outer membrane biogenesis; lipopolysaccharide biosynthesis. The chain is 2-dehydro-3-deoxyphosphooctonate aldolase from Shewanella baltica (strain OS223).